Consider the following 487-residue polypeptide: Proline--tRNA ligase (487 aa).

It belongs to the class-II aminoacyl-tRNA synthetase family. ProS type 3 subfamily. In terms of assembly, homodimer.

The protein localises to the cytoplasm. It carries out the reaction tRNA(Pro) + L-proline + ATP = L-prolyl-tRNA(Pro) + AMP + diphosphate. Its function is as follows. Catalyzes the attachment of proline to tRNA(Pro) in a two-step reaction: proline is first activated by ATP to form Pro-AMP and then transferred to the acceptor end of tRNA(Pro). The protein is Proline--tRNA ligase of Pyrobaculum calidifontis (strain DSM 21063 / JCM 11548 / VA1).